Reading from the N-terminus, the 250-residue chain is 3-deoxy-manno-octulosonate cytidylyltransferase (250 aa).

It belongs to the KdsB family.

It is found in the cytoplasm. It catalyses the reaction 3-deoxy-alpha-D-manno-oct-2-ulosonate + CTP = CMP-3-deoxy-beta-D-manno-octulosonate + diphosphate. It participates in nucleotide-sugar biosynthesis; CMP-3-deoxy-D-manno-octulosonate biosynthesis; CMP-3-deoxy-D-manno-octulosonate from 3-deoxy-D-manno-octulosonate and CTP: step 1/1. Its pathway is bacterial outer membrane biogenesis; lipopolysaccharide biosynthesis. Activates KDO (a required 8-carbon sugar) for incorporation into bacterial lipopolysaccharide in Gram-negative bacteria. The polypeptide is 3-deoxy-manno-octulosonate cytidylyltransferase (Actinobacillus pleuropneumoniae serotype 7 (strain AP76)).